Here is a 440-residue protein sequence, read N- to C-terminus: GTPase Der (440 aa).

EngA-type G domains follow at residues 4–169 (PVVA…PEED) and 178–353 (IKVA…DQAA). GTP is bound by residues 10–17 (GRPNVGKS), 57–61 (DTGGI), 120–123 (NKVD), 184–191 (GKPNVGKS), 231–235 (DTAGI), and 296–299 (NKWD). The KH-like domain maps to 354–438 (MRISTGVLND…PIKFILREKE (85 aa)).

The protein belongs to the TRAFAC class TrmE-Era-EngA-EngB-Septin-like GTPase superfamily. EngA (Der) GTPase family. Associates with the 50S ribosomal subunit.

GTPase that plays an essential role in the late steps of ribosome biogenesis. The chain is GTPase Der from Acetivibrio thermocellus (strain ATCC 27405 / DSM 1237 / JCM 9322 / NBRC 103400 / NCIMB 10682 / NRRL B-4536 / VPI 7372) (Clostridium thermocellum).